The primary structure comprises 146 residues: Small ribosomal subunit protein uS9z (146 aa).

The protein belongs to the universal ribosomal protein uS9 family.

The chain is Small ribosomal subunit protein uS9z (RPS16A) from Arabidopsis thaliana (Mouse-ear cress).